A 289-amino-acid polypeptide reads, in one-letter code: ATP synthase gamma chain (289 aa).

It belongs to the ATPase gamma chain family. As to quaternary structure, F-type ATPases have 2 components, CF(1) - the catalytic core - and CF(0) - the membrane proton channel. CF(1) has five subunits: alpha(3), beta(3), gamma(1), delta(1), epsilon(1). CF(0) has three main subunits: a, b and c.

The protein localises to the cell inner membrane. Functionally, produces ATP from ADP in the presence of a proton gradient across the membrane. The gamma chain is believed to be important in regulating ATPase activity and the flow of protons through the CF(0) complex. In Aromatoleum aromaticum (strain DSM 19018 / LMG 30748 / EbN1) (Azoarcus sp. (strain EbN1)), this protein is ATP synthase gamma chain.